The primary structure comprises 255 residues: MMHDDPNEAGLPPHNDAIPDETAEGADEVNPLHHRRIRSFVTRAGRVSTGQRRALDEFGPRFVVPYAPEMPDWDAIFGRSAPRILEIGFGMGASTAEIAAHRPSDDFLGVEVHEPGVGALLKLIGEQGLSNIRIIQHDAVEVLEHMIAPASLDGVHIFFPDPWHKARHHKRRLIQPPLVAHLASRLKPGAYLHCATDWQNYAEQMLEVLGAEPTLENTAADYAPRPDYRPVTKFERRGLRLGHGVWDLVFRKRAD.

The interval 1–31 is disordered; sequence MMHDDPNEAGLPPHNDAIPDETAEGADEVNP. Positions 18–27 are enriched in acidic residues; it reads IPDETAEGAD. S-adenosyl-L-methionine contacts are provided by Glu86, Glu111, Asp138, and Asp161. Asp161 is a catalytic residue. Residues Lys165, Asp197, and 232-235 contribute to the substrate site; that span reads TKFE.

This sequence belongs to the class I-like SAM-binding methyltransferase superfamily. TrmB family.

The enzyme catalyses guanosine(46) in tRNA + S-adenosyl-L-methionine = N(7)-methylguanosine(46) in tRNA + S-adenosyl-L-homocysteine. It functions in the pathway tRNA modification; N(7)-methylguanine-tRNA biosynthesis. Catalyzes the formation of N(7)-methylguanine at position 46 (m7G46) in tRNA. The sequence is that of tRNA (guanine-N(7)-)-methyltransferase from Burkholderia cenocepacia (strain HI2424).